A 451-amino-acid polypeptide reads, in one-letter code: Protein SAR DEFICIENT 1 (451 aa).

A DNA-binding region spans residues 149-270 (DKWTSDEFES…AFHKKLSSRH (122 aa)).

Belongs to the plant ACBP60 protein family. As to quaternary structure, (Microbial infection) Interacts with V.dahliae SCP41.

The protein localises to the nucleus. In terms of biological role, transcription activator that binds DNA in a sequence-specific manner, 5'-GAAATTTTGG-3', to promote the expression of target genes. Recruited to the promoter of ICS1 and other defense-related genes (e.g. PR1 and SID2) in response to both biotic (e.g. Pseudomonas syringae pv. maculicola ES4326) and abiotic stresses (e.g. UV-B), thus triggering slow defense responses by stimulating salicylic acid (SA) biosynthesis. Required for basal and systemic acquired resistance to P.syringae pv. maculicola and Hyaloperonospora arabidopsidis. The polypeptide is Protein SAR DEFICIENT 1 (Arabidopsis thaliana (Mouse-ear cress)).